Here is a 299-residue protein sequence, read N- to C-terminus: Protease HtpX homolog (299 aa).

2 helical membrane-spanning segments follow: residues 14 to 34 and 39 to 59; these read WLLL…VGNL and GFGG…TMIF. Zn(2+) is bound at residue H143. E144 is a catalytic residue. H147 provides a ligand contact to Zn(2+). Helical transmembrane passes span 153-173 and 198-218; these read IRIS…AGMA and IVFL…ATLV. E227 contributes to the Zn(2+) binding site.

The protein belongs to the peptidase M48B family. Zn(2+) serves as cofactor.

It localises to the cell membrane. The sequence is that of Protease HtpX homolog from Streptococcus thermophilus (strain ATCC BAA-250 / LMG 18311).